The primary structure comprises 207 residues: Redox-sensing transcriptional repressor Rex (207 aa).

A DNA-binding region (H-T-H motif) is located at residues 15 to 54; the sequence is LYYRCLNRLYEEGIEYVASKDIAERLGIKSSQVRKDLSYF. 89 to 94 is a binding site for NAD(+); the sequence is GAGNIG.

Belongs to the transcriptional regulatory Rex family. As to quaternary structure, homodimer.

It localises to the cytoplasm. Its function is as follows. Modulates transcription in response to changes in cellular NADH/NAD(+) redox state. This is Redox-sensing transcriptional repressor Rex from Thermosipho africanus (strain TCF52B).